Here is a 428-residue protein sequence, read N- to C-terminus: Peptidase B (428 aa).

2 residues coordinate Mn(2+): Lys-195 and Asp-200. The active site involves Lys-207. 3 residues coordinate Mn(2+): Asp-218, Asp-277, and Glu-279. Residue Arg-281 is part of the active site.

The protein belongs to the peptidase M17 family. As to quaternary structure, homohexamer. Mn(2+) is required as a cofactor.

The protein resides in the cytoplasm. It carries out the reaction Release of an N-terminal amino acid, Xaa, from a peptide or arylamide. Xaa is preferably Glu or Asp but may be other amino acids, including Leu, Met, His, Cys and Gln.. Its function is as follows. Probably plays an important role in intracellular peptide degradation. The chain is Peptidase B from Cronobacter sakazakii (strain ATCC BAA-894) (Enterobacter sakazakii).